Here is a 489-residue protein sequence, read N- to C-terminus: Rhamnulokinase (489 aa).

Position 13–17 (13–17 (ASSGR)) interacts with ATP. Cysteine 68 and cysteine 222 are oxidised to a cystine. Substrate-binding positions include glycine 83 and 236 to 238 (HDT). The active-site Proton acceptor is aspartate 237. Threonine 259 is a binding site for ATP. Position 296 (asparagine 296) interacts with substrate. Glutamine 304 is an ATP binding site. Cysteine 353 and cysteine 370 are disulfide-bonded. Glycine 402 contributes to the ATP binding site. Cysteine 413 and cysteine 417 are oxidised to a cystine.

It belongs to the rhamnulokinase family. Mg(2+) serves as cofactor.

It carries out the reaction L-rhamnulose + ATP = L-rhamnulose 1-phosphate + ADP + H(+). It functions in the pathway carbohydrate degradation; L-rhamnose degradation; glycerone phosphate from L-rhamnose: step 2/3. Its function is as follows. Involved in the catabolism of L-rhamnose (6-deoxy-L-mannose). Catalyzes the transfer of the gamma-phosphate group from ATP to the 1-hydroxyl group of L-rhamnulose to yield L-rhamnulose 1-phosphate. The sequence is that of Rhamnulokinase from Salmonella agona (strain SL483).